A 270-amino-acid polypeptide reads, in one-letter code: 3-methyl-2-oxobutanoate hydroxymethyltransferase (270 aa).

Residues Asp50 and Asp89 each contribute to the Mg(2+) site. 3-methyl-2-oxobutanoate contacts are provided by residues 50–51 (DS), Asp89, and Lys118. Glu120 lines the Mg(2+) pocket. Glu187 serves as the catalytic Proton acceptor.

It belongs to the PanB family. In terms of assembly, homodecamer; pentamer of dimers. Mg(2+) serves as cofactor.

The protein resides in the cytoplasm. The enzyme catalyses 3-methyl-2-oxobutanoate + (6R)-5,10-methylene-5,6,7,8-tetrahydrofolate + H2O = 2-dehydropantoate + (6S)-5,6,7,8-tetrahydrofolate. It functions in the pathway cofactor biosynthesis; (R)-pantothenate biosynthesis; (R)-pantoate from 3-methyl-2-oxobutanoate: step 1/2. In terms of biological role, catalyzes the reversible reaction in which hydroxymethyl group from 5,10-methylenetetrahydrofolate is transferred onto alpha-ketoisovalerate to form ketopantoate. In Helicobacter acinonychis (strain Sheeba), this protein is 3-methyl-2-oxobutanoate hydroxymethyltransferase.